Consider the following 882-residue polypeptide: DNA mismatch repair protein MutS (882 aa).

An ATP-binding site is contributed by 656–663; the sequence is GPNASGKS.

This sequence belongs to the DNA mismatch repair MutS family.

This protein is involved in the repair of mismatches in DNA. It is possible that it carries out the mismatch recognition step. This protein has a weak ATPase activity. In Synechococcus elongatus (strain ATCC 33912 / PCC 7942 / FACHB-805) (Anacystis nidulans R2), this protein is DNA mismatch repair protein MutS.